We begin with the raw amino-acid sequence, 521 residues long: Probable xyloglucan galactosyltransferase GT14 (521 aa).

Residues 1–30 (MRPKNYSQMEKPISITTGKFRTNNNNNHNN) lie on the Cytoplasmic side of the membrane. The helical; Signal-anchor for type II membrane protein transmembrane segment at 31-51 (VWFVVPLFFILCFVLLCFDYS) threads the bilayer. Residues 52–521 (ALFTDTDETA…SPYEEPQVLA (470 aa)) are Lumenal-facing. Residues 72–92 (TSSEFTKDDNFSRFPDDPSPD) are disordered. The span at 76–87 (FTKDDNFSRFPD) shows a compositional bias: basic and acidic residues. N-linked (GlcNAc...) asparagine glycosylation is found at Asn-81, Asn-177, Asn-203, Asn-249, Asn-265, and Asn-411. Positions 492-521 (RQGKDGSDGFDDRDDYKYTFSPYEEPQVLA) are disordered.

Belongs to the glycosyltransferase 47 family. Expressed in roots, hypocotyls, cotyledons, leaves, stems, stamens and carpels.

Its subcellular location is the golgi apparatus membrane. Its function is as follows. Functions in xyloglucan synthesis by adding side chains to the xylosylated glucan backbone. Involved in the galactosylation of hemicellulose xyloglucan. This chain is Probable xyloglucan galactosyltransferase GT14, found in Arabidopsis thaliana (Mouse-ear cress).